The primary structure comprises 392 residues: Chalcone synthase (392 aa).

Cys165 is a catalytic residue.

Belongs to the thiolase-like superfamily. Chalcone/stilbene synthases family.

The catalysed reaction is (E)-4-coumaroyl-CoA + 3 malonyl-CoA + 3 H(+) = 2',4,4',6'-tetrahydroxychalcone + 3 CO2 + 4 CoA. Its pathway is secondary metabolite biosynthesis; flavonoid biosynthesis. In terms of biological role, the primary product of this enzyme is 4,2',4',6'-tetrahydroxychalcone (also termed naringenin-chalcone or chalcone) which can under specific conditions spontaneously isomerize into naringenin. This is Chalcone synthase (CHS) from Persea americana (Avocado).